We begin with the raw amino-acid sequence, 272 residues long: Phosphatidylglycerol--prolipoprotein diacylglyceryl transferase (272 aa).

4 helical membrane-spanning segments follow: residues 15–35 (LGPL…LVLF), 53–73 (AFAV…WHVV), 94–114 (GLGF…IAKI), and 117–137 (VPPF…LCFA). Residue R138 coordinates a 1,2-diacyl-sn-glycero-3-phospho-(1'-sn-glycerol). 3 helical membrane-spanning segments follow: residues 174–194 (FHPI…ILLV), 199–219 (VFVK…VLYG), and 237–257 (FGLD…VLIA).

Belongs to the Lgt family.

It is found in the cell membrane. It carries out the reaction L-cysteinyl-[prolipoprotein] + a 1,2-diacyl-sn-glycero-3-phospho-(1'-sn-glycerol) = an S-1,2-diacyl-sn-glyceryl-L-cysteinyl-[prolipoprotein] + sn-glycerol 1-phosphate + H(+). The protein operates within protein modification; lipoprotein biosynthesis (diacylglyceryl transfer). Catalyzes the transfer of the diacylglyceryl group from phosphatidylglycerol to the sulfhydryl group of the N-terminal cysteine of a prolipoprotein, the first step in the formation of mature lipoproteins. The sequence is that of Phosphatidylglycerol--prolipoprotein diacylglyceryl transferase from Tropheryma whipplei (strain TW08/27) (Whipple's bacillus).